The primary structure comprises 120 residues: Large ribosomal subunit protein bL20 (120 aa).

Belongs to the bacterial ribosomal protein bL20 family.

Its function is as follows. Binds directly to 23S ribosomal RNA and is necessary for the in vitro assembly process of the 50S ribosomal subunit. It is not involved in the protein synthesizing functions of that subunit. The sequence is that of Large ribosomal subunit protein bL20 from Paracidovorax citrulli (strain AAC00-1) (Acidovorax citrulli).